Consider the following 342-residue polypeptide: Dihydroorotate dehydrogenase (quinone) (342 aa).

Residues 61-65 and threonine 85 contribute to the FMN site; that span reads AGLDK. Lysine 65 provides a ligand contact to substrate. 110-114 serves as a coordination point for substrate; that stretch reads NRMGF. Residues asparagine 138 and asparagine 171 each contribute to the FMN site. Asparagine 171 is a substrate binding site. The active-site Nucleophile is serine 174. Asparagine 176 is a binding site for substrate. Positions 216 and 244 each coordinate FMN. 245–246 provides a ligand contact to substrate; sequence NT. Residues glycine 267, glycine 296, and 317–318 each bind FMN; that span reads YS.

It belongs to the dihydroorotate dehydrogenase family. Type 2 subfamily. Monomer. FMN is required as a cofactor.

The protein resides in the cell membrane. The catalysed reaction is (S)-dihydroorotate + a quinone = orotate + a quinol. It functions in the pathway pyrimidine metabolism; UMP biosynthesis via de novo pathway; orotate from (S)-dihydroorotate (quinone route): step 1/1. Catalyzes the conversion of dihydroorotate to orotate with quinone as electron acceptor. The sequence is that of Dihydroorotate dehydrogenase (quinone) from Pseudomonas paraeruginosa (strain DSM 24068 / PA7) (Pseudomonas aeruginosa (strain PA7)).